A 962-amino-acid chain; its full sequence is Protease 3 (962 aa).

The signal sequence occupies residues 1–23 (MPRSTWFKALLLLVALWGPAVQA). H88 provides a ligand contact to Zn(2+). The active-site Proton acceptor is E91. 2 residues coordinate Zn(2+): H92 and E169.

It belongs to the peptidase M16 family. As to quaternary structure, monomer. Requires Zn(2+) as cofactor.

The protein localises to the periplasm. The enzyme catalyses Preferential cleavage of 16-Tyr-|-Leu-17 and 25-Phe-|-Tyr-26 bonds of oxidized insulin B chain. Also acts on other substrates of Mw less than 7 kDa such as insulin and glucagon.. In terms of biological role, endopeptidase that degrades small peptides of less than 7 kDa, such as glucagon and insulin. The sequence is that of Protease 3 (ptrA) from Salmonella typhimurium (strain LT2 / SGSC1412 / ATCC 700720).